A 437-amino-acid chain; its full sequence is Enolase superfamily member DDB_G0284701 (437 aa).

Residue K217 is the Proton acceptor of the active site. Mn(2+) contacts are provided by D251, E279, and D321. Residue D395 is the Proton donor of the active site.

This sequence belongs to the mandelate racemase/muconate lactonizing enzyme family.

This Dictyostelium discoideum (Social amoeba) protein is Enolase superfamily member DDB_G0284701.